Here is a 477-residue protein sequence, read N- to C-terminus: Bifunctional protein HldE (477 aa).

The tract at residues 1-318 is ribokinase; it reads MKVTLPEFER…ENAVRGRADT (318 aa). At lysine 179 the chain carries N6-acetyllysine. ATP is bound at residue 195–198; sequence NLSE. Residue aspartate 264 is part of the active site. Residues 344 to 477 are cytidylyltransferase; it reads MTNGVFDILH…IKKIQQDKKG (134 aa).

It in the N-terminal section; belongs to the carbohydrate kinase PfkB family. In the C-terminal section; belongs to the cytidylyltransferase family. In terms of assembly, homodimer.

The catalysed reaction is D-glycero-beta-D-manno-heptose 7-phosphate + ATP = D-glycero-beta-D-manno-heptose 1,7-bisphosphate + ADP + H(+). It catalyses the reaction D-glycero-beta-D-manno-heptose 1-phosphate + ATP + H(+) = ADP-D-glycero-beta-D-manno-heptose + diphosphate. It functions in the pathway nucleotide-sugar biosynthesis; ADP-L-glycero-beta-D-manno-heptose biosynthesis; ADP-L-glycero-beta-D-manno-heptose from D-glycero-beta-D-manno-heptose 7-phosphate: step 1/4. It participates in nucleotide-sugar biosynthesis; ADP-L-glycero-beta-D-manno-heptose biosynthesis; ADP-L-glycero-beta-D-manno-heptose from D-glycero-beta-D-manno-heptose 7-phosphate: step 3/4. Functionally, catalyzes the phosphorylation of D-glycero-D-manno-heptose 7-phosphate at the C-1 position to selectively form D-glycero-beta-D-manno-heptose-1,7-bisphosphate. Catalyzes the ADP transfer from ATP to D-glycero-beta-D-manno-heptose 1-phosphate, yielding ADP-D-glycero-beta-D-manno-heptose. This Shigella sonnei (strain Ss046) protein is Bifunctional protein HldE.